The chain runs to 749 residues: Dynamin-1-like protein (749 aa).

Met1 is subject to N-acetylmethionine. One can recognise a Dynamin-type G domain in the interval 22–315 (IIQLPQIVVV…LMHHIRDCLP (294 aa)). Residues 32 to 39 (GTQSSGKS) form a G1 motif region. 32–40 (GTQSSGKSS) contributes to the GTP binding site. Residues 58–60 (VTR) are G2 motif. The disordered stretch occupies residues 74-93 (DKRKTTGEENDPATWKNSRH). Positions 159–162 (DLPG) are G3 motif. A G4 motif region spans residues 228–231 (TKLD). GTP-binding positions include 228–234 (TKLDLMD) and 259–262 (NRSQ). The tract at residues 258 to 261 (VNRS) is G5 motif. The middle domain stretch occupies residues 357-502 (YCNTIEGTAK…NEMVHNLVAI (146 aa)). Residues 461–698 (NYSTQELLRF…NHVKDTLQSE (238 aa)) are interaction with GSK3B. The segment at 515-582 (ADACGLMNNN…IQESRRETKN (68 aa)) is b domain. The segment at 536–604 (ELPSAVSRDK…QEPTTGNWRG (69 aa)) is disordered. Phosphoserine is present on Ser542. Glycyl lysine isopeptide (Lys-Gly) (interchain with G-Cter in SUMO) cross-links involve residues Lys545 and Lys548. A compositionally biased stretch (low complexity) spans 550–567 (PSALAPASQEPSPAASAE). Ser561 is subject to Phosphoserine. Residues 568 to 581 (ADGKLIQESRRETK) are compositionally biased toward basic and acidic residues. Residues Lys571 and Lys581 each participate in a glycyl lysine isopeptide (Lys-Gly) (interchain with G-Cter in SUMO) cross-link. 2 O-linked (GlcNAc) threonine glycosylation sites follow: Thr598 and Thr599. Lys607 is covalently cross-linked (Glycyl lysine isopeptide (Lys-Gly) (interchain with G-Cter in SUMO)). At Lys610 the chain carries N6-acetyllysine; alternate. Lys610 participates in a covalent cross-link: Glycyl lysine isopeptide (Lys-Gly) (interchain with G-Cter in SUMO); alternate. A Glycyl lysine isopeptide (Lys-Gly) (interchain with G-Cter in SUMO) cross-link involves residue Lys619. Ser620 carries the post-translational modification Phosphoserine. A Glycyl lysine isopeptide (Lys-Gly) (interchain with G-Cter in SUMO) cross-link involves residue Lys621. The residue at position 629 (Ser629) is a Phosphoserine; by CDK1 and PINK1. Ser650 carries the phosphoserine; by CAMK1 and PKA modification. Cys657 bears the S-nitrosocysteine mark. Residues 657–748 (CEVIERLIKS…IIAEIRETHL (92 aa)) enclose the GED domain. The tract at residues 667–681 (YFLIVRKNIQDSVPK) is important for homodimerization.

Belongs to the TRAFAC class dynamin-like GTPase superfamily. Dynamin/Fzo/YdjA family. As to quaternary structure, homotetramer; dimerizes through the N-terminal GTP-middle region of one molecule binding to the GED domain of another DNM1L molecule. Oligomerizes in a GTP-dependent manner to form membrane-associated tubules with a spiral pattern. Interacts with GSK3B and MARCHF5. Interacts (via the GTPase and B domains) with UBE2I; the interaction promotes sumoylation of DNM1L, mainly in its B domain. Interacts with PPP3CA; the interaction dephosphorylates DNM1L and regulates its transition to mitochondria. Interacts with BCL2L1 isoform BCL-X(L) and CLTA; DNM1L and BCL2L1 isoform BCL-X(L) may form a complex in synaptic vesicles that also contains clathrin and MFF. Interacts with MFF; the interaction is inhinited by C11orf65/MFI. Interacts with FIS1. Interacts with MIEF2 and MIEF1; GTP-dependent, regulates GTP hydrolysis and DNM1L oligomerization. Interacts with PGAM5; this interaction leads to dephosphorylation at Ser-656 and activation of GTPase activity and eventually to mitochondria fragmentation. Interacts with RALBP1; during mitosis, recruits DNM1L to the mitochondrion and mediates its activation by the mitotic kinase cyclin B-CDK1. In terms of processing, phosphorylation/dephosphorylation events on two sites near the GED domain regulate mitochondrial fission. Phosphorylation on Ser-650 by CAMK1 and PKA inhibits the GTPase activity, leading to a defect in mitochondrial fission promoting mitochondrial elongation. Dephosphorylated on this site by PPP3CA which promotes mitochondrial fission. Phosphorylation on Ser-629 by CDK1 and PINK1 activates the GTPase activity and promotes mitochondrial fission. Phosphorylated in a circadian manner at Ser-650. Sumoylated on various lysine residues within the B domain, probably by MUL1. Sumoylation positively regulates mitochondrial fission. Desumoylated by SENP5 during G2/M transition of mitosis. Appears to be linked to its catalytic activity. Post-translationally, S-nitrosylation increases DNM1L dimerization, mitochondrial fission and causes neuronal damage. In terms of processing, O-GlcNAcylation augments the level of the GTP-bound active form of DNM1L and induces translocation from the cytoplasm to mitochondria in cardiomyocytes. It also decreases phosphorylation at Ser-650. Ubiquitination by MARCHF5 affects mitochondrial morphology.

The protein localises to the cytoplasm. The protein resides in the cytosol. It is found in the golgi apparatus. Its subcellular location is the endomembrane system. It localises to the mitochondrion outer membrane. The protein localises to the peroxisome. The protein resides in the membrane. It is found in the clathrin-coated pit. Its subcellular location is the cytoplasmic vesicle. It localises to the secretory vesicle. The protein localises to the synaptic vesicle membrane. The enzyme catalyses GTP + H2O = GDP + phosphate + H(+). In terms of biological role, functions in mitochondrial and peroxisomal division. Mediates membrane fission through oligomerization into membrane-associated tubular structures that wrap around the scission site to constrict and sever the mitochondrial membrane through a GTP hydrolysis-dependent mechanism. The specific recruitment at scission sites is mediated by membrane receptors like MFF, MIEF1 and MIEF2 for mitochondrial membranes. While the recruitment by the membrane receptors is GTP-dependent, the following hydrolysis of GTP induces the dissociation from the receptors and allows DNM1L filaments to curl into closed rings that are probably sufficient to sever a double membrane. Acts downstream of PINK1 to promote mitochondrial fission in a PRKN-dependent manner. Plays an important role in mitochondrial fission during mitosis. Through its function in mitochondrial division, ensures the survival of at least some types of postmitotic neurons, including Purkinje cells, by suppressing oxidative damage. Required for normal brain development, including that of cerebellum. Facilitates developmentally regulated apoptosis during neural tube formation. Required for a normal rate of cytochrome c release and caspase activation during apoptosis; this requirement may depend upon the cell type and the physiological apoptotic cues. Required for formation of endocytic vesicles. Proposed to regulate synaptic vesicle membrane dynamics through association with BCL2L1 isoform Bcl-X(L) which stimulates its GTPase activity in synaptic vesicles; the function may require its recruitment by MFF to clathrin-containing vesicles. Required for programmed necrosis execution. Rhythmic control of its activity following phosphorylation at Ser-650 is essential for the circadian control of mitochondrial ATP production. The chain is Dynamin-1-like protein from Bos taurus (Bovine).